The following is a 237-amino-acid chain: Ribosomal RNA small subunit methyltransferase G (237 aa).

S-adenosyl-L-methionine is bound by residues Gly-78, Phe-83, 129–130, and Arg-148; that span reads AE. The segment at 216–237 is disordered; sequence SKKKETPNKYPRKAGTPNKKPL.

It belongs to the methyltransferase superfamily. RNA methyltransferase RsmG family.

The protein resides in the cytoplasm. Specifically methylates the N7 position of a guanine in 16S rRNA. The sequence is that of Ribosomal RNA small subunit methyltransferase G from Streptococcus agalactiae serotype V (strain ATCC BAA-611 / 2603 V/R).